Reading from the N-terminus, the 216-residue chain is Probable nicotinate-nucleotide adenylyltransferase (216 aa).

Belongs to the NadD family.

It carries out the reaction nicotinate beta-D-ribonucleotide + ATP + H(+) = deamido-NAD(+) + diphosphate. It participates in cofactor biosynthesis; NAD(+) biosynthesis; deamido-NAD(+) from nicotinate D-ribonucleotide: step 1/1. In terms of biological role, catalyzes the reversible adenylation of nicotinate mononucleotide (NaMN) to nicotinic acid adenine dinucleotide (NaAD). The chain is Probable nicotinate-nucleotide adenylyltransferase from Geobacter sp. (strain M21).